A 30-amino-acid polypeptide reads, in one-letter code: Diuretic hormone 2 (30 aa).

The residue at position 30 (valine 30) is a Valine amide.

It belongs to the sauvagine/corticotropin-releasing factor/urotensin I family.

Its subcellular location is the secreted. Its function is as follows. Regulation of fluid secretion. The sequence is that of Diuretic hormone 2 from Manduca sexta (Tobacco hawkmoth).